A 518-amino-acid chain; its full sequence is Probable high-affinity hexose transporter ght7 (518 aa).

The Cytoplasmic segment spans residues 1 to 27 (MRDFQSRFADRYNQITNSYSYSSSRQG). Residues 28 to 48 (LITGMVNVGSFFGCLLSSPVA) traverse the membrane as a helical segment. The Extracellular portion of the chain corresponds to 49 to 54 (DKIGKR). The chain crosses the membrane as a helical span at residues 55-75 (LSIIVWTTVYLIGIIIQVTTV). Over 76–77 (PS) the chain is Cytoplasmic. Residues 78-98 (WVQILVAKIWTGLSIGALSVI) form a helical membrane-spanning segment. Residues 99-112 (TPGYQSEVAPAIMR) lie on the Extracellular side of the membrane. Residues 113-133 (GAIVTTYQLFITLGIFIAACI) traverse the membrane as a helical segment. Residues 134-149 (NMGTHKYSHGTTAQWR) lie on the Cytoplasmic side of the membrane. The chain crosses the membrane as a helical span at residues 150–170 (ISIGINLLWGIITLVGIIFLP). The Extracellular segment spans residues 171–236 (ESPRYLIAIG…IFNANIRYRT (66 aa)). The chain crosses the membrane as a helical span at residues 237 to 257 (FLGMAVMMFQQLTGANYYFYY). Topologically, residues 258–271 (GTQVFRGTGMDSPY) are cytoplasmic. The helical transmembrane segment at 272–292 (LAALIPDAVNCGCTFGAIFVL) threads the bilayer. Topologically, residues 293–298 (EFFGRR) are extracellular. Residues 299–319 (SPLIVGGIWQYICFFIYAAVG) traverse the membrane as a helical segment. The Cytoplasmic segment spans residues 320–333 (DRALYHKNGTSNHR). The helical transmembrane segment at 334–354 (AGAVMIVFSCLFIFSFSQTWA) threads the bilayer. At 355-374 (PAAYVIVGESYPVRYRSKCA) the chain is on the extracellular side. A helical transmembrane segment spans residues 375 to 395 (AVATSANWFWNFLISFFTPFI). The Cytoplasmic portion of the chain corresponds to 396-402 (TNSIGFK). The chain crosses the membrane as a helical span at residues 403–423 (YGYIFASCNLTGAAIIFLFVH). The Extracellular segment spans residues 424–518 (ETKGRTLEEI…IRPDKREPRL (95 aa)). Residues 477-506 (IENTDNQGDSGSFQTSTPDDSRPEQNQASA) show a composition bias toward polar residues. Residues 477–518 (IENTDNQGDSGSFQTSTPDDSRPEQNQASATYIRPDKREPRL) form a disordered region.

The protein belongs to the major facilitator superfamily. Sugar transporter (TC 2.A.1.1) family.

It is found in the membrane. This chain is Probable high-affinity hexose transporter ght7 (ght7), found in Schizosaccharomyces pombe (strain 972 / ATCC 24843) (Fission yeast).